Reading from the N-terminus, the 218-residue chain is Protein-methionine-sulfoxide reductase heme-binding subunit MsrQ (218 aa).

5 consecutive transmembrane segments (helical) span residues leucine 14–tryptophan 34, phenylalanine 60–isoleucine 80, leucine 86–leucine 106, proline 121–threonine 141, and leucine 155–lysine 175.

This sequence belongs to the MsrQ family. In terms of assembly, heterodimer of a catalytic subunit (MsrP) and a heme-binding subunit (MsrQ). It depends on FMN as a cofactor. Heme b serves as cofactor.

The protein localises to the cell inner membrane. Its function is as follows. Part of the MsrPQ system that repairs oxidized periplasmic proteins containing methionine sulfoxide residues (Met-O), using respiratory chain electrons. Thus protects these proteins from oxidative-stress damage caused by reactive species of oxygen and chlorine generated by the host defense mechanisms. MsrPQ is essential for the maintenance of envelope integrity under bleach stress, rescuing a wide series of structurally unrelated periplasmic proteins from methionine oxidation. MsrQ provides electrons for reduction to the reductase catalytic subunit MsrP, using the quinone pool of the respiratory chain. This Xanthomonas euvesicatoria pv. vesicatoria (strain 85-10) (Xanthomonas campestris pv. vesicatoria) protein is Protein-methionine-sulfoxide reductase heme-binding subunit MsrQ.